The primary structure comprises 319 residues: tRNA N6-adenosine threonylcarbamoyltransferase (319 aa).

Residues histidine 110 and histidine 114 each contribute to the Fe cation site. Substrate contacts are provided by residues 135–139 (VVSGG), aspartate 168, glycine 181, aspartate 185, and asparagine 277. Aspartate 301 contacts Fe cation.

This sequence belongs to the KAE1 / TsaD family. Fe(2+) is required as a cofactor.

It is found in the cytoplasm. The enzyme catalyses L-threonylcarbamoyladenylate + adenosine(37) in tRNA = N(6)-L-threonylcarbamoyladenosine(37) in tRNA + AMP + H(+). Its function is as follows. Required for the formation of a threonylcarbamoyl group on adenosine at position 37 (t(6)A37) in tRNAs that read codons beginning with adenine. Is involved in the transfer of the threonylcarbamoyl moiety of threonylcarbamoyl-AMP (TC-AMP) to the N6 group of A37, together with TsaE and TsaB. TsaD likely plays a direct catalytic role in this reaction. The chain is tRNA N6-adenosine threonylcarbamoyltransferase from Mycoplasma pneumoniae (strain ATCC 29342 / M129 / Subtype 1) (Mycoplasmoides pneumoniae).